Consider the following 48-residue polypeptide: Large ribosomal subunit protein eL40 (48 aa).

This sequence belongs to the eukaryotic ribosomal protein eL40 family.

The protein is Large ribosomal subunit protein eL40 of Methanobrevibacter smithii (strain ATCC 35061 / DSM 861 / OCM 144 / PS).